The sequence spans 202 residues: Holliday junction branch migration complex subunit RuvA (202 aa).

A domain I region spans residues 1 to 64; sequence MIGRLRGTLA…EDAQLLYGFA (64 aa). The domain II stretch occupies residues 65–143; that stretch reads GKRERDFFRE…AWETSPAMFA (79 aa). The flexible linker stretch occupies residues 144-154; sequence LVPNQPDGPAP. The domain III stretch occupies residues 154–202; that stretch reads PVNTAENDAVSALISLGYKPQEASKAISAIKEKGLSSEDMIRRALKGMI.

The protein belongs to the RuvA family. As to quaternary structure, homotetramer. Forms an RuvA(8)-RuvB(12)-Holliday junction (HJ) complex. HJ DNA is sandwiched between 2 RuvA tetramers; dsDNA enters through RuvA and exits via RuvB. An RuvB hexamer assembles on each DNA strand where it exits the tetramer. Each RuvB hexamer is contacted by two RuvA subunits (via domain III) on 2 adjacent RuvB subunits; this complex drives branch migration. In the full resolvosome a probable DNA-RuvA(4)-RuvB(12)-RuvC(2) complex forms which resolves the HJ.

It is found in the cytoplasm. The RuvA-RuvB-RuvC complex processes Holliday junction (HJ) DNA during genetic recombination and DNA repair, while the RuvA-RuvB complex plays an important role in the rescue of blocked DNA replication forks via replication fork reversal (RFR). RuvA specifically binds to HJ cruciform DNA, conferring on it an open structure. The RuvB hexamer acts as an ATP-dependent pump, pulling dsDNA into and through the RuvAB complex. HJ branch migration allows RuvC to scan DNA until it finds its consensus sequence, where it cleaves and resolves the cruciform DNA. The sequence is that of Holliday junction branch migration complex subunit RuvA from Pseudomonas fluorescens (strain Pf0-1).